Consider the following 456-residue polypeptide: Histidine--tRNA ligase (456 aa).

The protein belongs to the class-II aminoacyl-tRNA synthetase family. In terms of assembly, homodimer.

Its subcellular location is the cytoplasm. It catalyses the reaction tRNA(His) + L-histidine + ATP = L-histidyl-tRNA(His) + AMP + diphosphate + H(+). This chain is Histidine--tRNA ligase, found in Christiangramia forsetii (strain DSM 17595 / CGMCC 1.15422 / KT0803) (Gramella forsetii).